Reading from the N-terminus, the 352-residue chain is 4-hydroxybenzaldehyde synthase, chloroplastic (352 aa).

Residue Asn-122 is glycosylated (N-linked (GlcNAc...) asparagine). Intrachain disulfides connect Cys-159/Cys-199 and Cys-190/Cys-231. Residue Asn-247 is glycosylated (N-linked (GlcNAc...) asparagine). Cys-289 and Cys-339 are disulfide-bonded. Residues His-298 and Asn-318 contribute to the active site.

It belongs to the peptidase C1 family. As to quaternary structure, forms homodimers, homotrimers and homotetramers. In terms of tissue distribution, mainly expressed in pods, but also present in stems, roots, leaves and embryos (at protein level).

The protein resides in the plastid. Its subcellular location is the chloroplast. It catalyses the reaction (E)-4-coumarate + H2O = 4-hydroxybenzaldehyde + acetate. Its pathway is aromatic compound metabolism; phenylpropanoid biosynthesis. Inhibited by ascorbate. Its function is as follows. Involved in the biosynthesis of vanillin (4-hydroxy-3-methoxy-benzaldehyde) and derivative natural products, key components of vanilla pods flavor. Catalyzes the conversion of (E)-4-coumarate to 4-hydroxybenzaldehyde, a vanillin precursor. Mediates the conversion of ferulic acid to 3-methoxy-4-hydroxybenzaldehyde with a very low efficiency. Cannot use cinnamic, caffeic, sinapic and o-coumaric acids as substrates. The protein is 4-hydroxybenzaldehyde synthase, chloroplastic of Vanilla planifolia (Vanilla).